A 647-amino-acid chain; its full sequence is DNA topoisomerase 4 subunit B (647 aa).

ATP-binding positions include Y11, N51, D78, 118–124 (GLHGVGS), and K344. Basic and acidic residues predominate over residues 391–401 (AARKARDESRN). Positions 391–421 (AARKARDESRNGKKNKKDKGLLSGKLTPAQS) are disordered. Residues 427–541 (NELYLVEGDS…AGHVYIALPP (115 aa)) enclose the Toprim domain. Mg(2+) is bound by residues E433, D506, and D508.

This sequence belongs to the type II topoisomerase family. ParE type 2 subfamily. As to quaternary structure, heterotetramer composed of ParC and ParE. It depends on Mg(2+) as a cofactor. Mn(2+) serves as cofactor. Ca(2+) is required as a cofactor.

It carries out the reaction ATP-dependent breakage, passage and rejoining of double-stranded DNA.. Inhibited by quinolones, such as levofloxacin. Topoisomerase IV is essential for chromosome segregation. It relaxes supercoiled DNA. Performs the decatenation events required during the replication of a circular DNA molecule. This is DNA topoisomerase 4 subunit B from Streptococcus pneumoniae serotype 4 (strain ATCC BAA-334 / TIGR4).